The primary structure comprises 269 residues: Interleukin-1 beta (269 aa).

Residues M1–D116 constitute a propeptide that is removed on maturation.

The protein belongs to the IL-1 family. In terms of assembly, monomer. In its precursor form, weakly interacts with full-length MEFV; the mature cytokine does not interact at all. Interacts with integrins ITGAV:ITGBV and ITGA5:ITGB1; integrin-binding is required for IL1B signaling. Interacts with cargo receptor TMED10; the interaction is direct and is required for the secretion of IL1B mature form. Interacts with HSP90AB1; the interaction facilitates cargo translocation into the ERGIC. Interacts with HSP90B1; the interaction facilitates cargo translocation into the ERGIC.

It is found in the cytoplasm. The protein localises to the cytosol. Its subcellular location is the secreted. It localises to the lysosome. The protein resides in the extracellular exosome. Functionally, potent pro-inflammatory cytokine. Initially discovered as the major endogenous pyrogen, induces prostaglandin synthesis, neutrophil influx and activation, T-cell activation and cytokine production, B-cell activation and antibody production, and fibroblast proliferation and collagen production. Promotes Th17 differentiation of T-cells. Synergizes with IL12/interleukin-12 to induce IFNG synthesis from T-helper 1 (Th1) cells. Plays a role in angiogenesis by inducing VEGF production synergistically with TNF and IL6. Involved in transduction of inflammation downstream of pyroptosis: its mature form is specifically released in the extracellular milieu by passing through the gasdermin-D (GSDMD) pore. This chain is Interleukin-1 beta (IL1B), found in Macaca nemestrina (Pig-tailed macaque).